A 490-amino-acid polypeptide reads, in one-letter code: MKKKLFFALLVLILSSCSLFFQKEYGTITIDLEGGRARSINSSTGLPNLADSELEIDILTEGNSSIYKKILASEPKFFQADFPIGSRLEITVKLNGPSSSWSAHNSHTVKEGNNDIRLLLNKNASSLANVGFSTAAVVNKYEFNIAGKRIDINSRELPVFTRDSRGRLYIAYKDINWKLNRYESDGTPNNFASDSPILTTITGASSVNLASDPVTGKVYVAADSNLYRIKDDGAVTPTGGTAHPAGPIAVYNNNLFVLGVSAVSGNNPLKMFTITEEGSVLTLNQAGSLIPVSTGQITISTSGSETTINVDFKDILVKKDKIYILFAKNNLPTPSTPSPYYSLGGMLEYTYNSSGVIDNPQKYGFNDTVTAGDDIVTAGEANFYGPACFIGYDEQSISIADDGCTFKKEGGSVRIYKNVNRIFSFNTSTKSLYSYATENKWFNEYEETATPPPPLPVRLARSYCGRKIVIRGIPRSAYLSRVAQFVCKTL.

Positions 1 to 16 (MKKKLFFALLVLILSS) are cleaved as a signal peptide. C17 carries the N-palmitoyl cysteine lipid modification. C17 carries S-diacylglycerol cysteine lipidation.

Its subcellular location is the cell membrane. In Treponema denticola, this protein is 53 kDa membrane antigen A (tdpA).